A 138-amino-acid polypeptide reads, in one-letter code: Putative thioredoxin-like protein 453L (138 aa).

A Thioredoxin domain is found at 3 to 138 (QQKYFEKPVY…FNNIVNYVMG (136 aa)). Catalysis depends on nucleophile residues Cys-44 and Cys-47. Cys-44 and Cys-47 form a disulfide bridge.

This sequence belongs to the thioredoxin family.

Its function is as follows. Participates in various redox reactions through the reversible oxidation of its active center dithiol to a disulfide and catalyzes dithiol-disulfide exchange reactions. This Acheta domesticus (House cricket) protein is Putative thioredoxin-like protein 453L.